Here is a 216-residue protein sequence, read N- to C-terminus: DNA replication complex GINS protein psf1 (216 aa).

Residues 110 to 133 are disordered; sequence QTTGGPKGVTEGNEGGGTTSSLSP. Over residues 111-127 the composition is skewed to gly residues; it reads TTGGPKGVTEGNEGGGT.

Belongs to the GINS1/PSF1 family. In terms of assembly, component of the GINS complex which is a heterotetramer of div-26/sld5, drc-1/psf1, drc-2/psf2 and drc-3/psf3.

Its subcellular location is the nucleus. Functionally, the GINS complex plays an essential role in the initiation of DNA replication. The protein is DNA replication complex GINS protein psf1 (drc-1) of Neurospora crassa (strain ATCC 24698 / 74-OR23-1A / CBS 708.71 / DSM 1257 / FGSC 987).